Here is a 326-residue protein sequence, read N- to C-terminus: 4-hydroxythreonine-4-phosphate dehydrogenase (326 aa).

Substrate is bound by residues H132 and T133. H162, H207, and H262 together coordinate a divalent metal cation. K270, N279, and R288 together coordinate substrate.

It belongs to the PdxA family. In terms of assembly, homodimer. Zn(2+) is required as a cofactor. Mg(2+) serves as cofactor. Requires Co(2+) as cofactor.

Its subcellular location is the cytoplasm. The enzyme catalyses 4-(phosphooxy)-L-threonine + NAD(+) = 3-amino-2-oxopropyl phosphate + CO2 + NADH. It participates in cofactor biosynthesis; pyridoxine 5'-phosphate biosynthesis; pyridoxine 5'-phosphate from D-erythrose 4-phosphate: step 4/5. Its function is as follows. Catalyzes the NAD(P)-dependent oxidation of 4-(phosphooxy)-L-threonine (HTP) into 2-amino-3-oxo-4-(phosphooxy)butyric acid which spontaneously decarboxylates to form 3-amino-2-oxopropyl phosphate (AHAP). This is 4-hydroxythreonine-4-phosphate dehydrogenase from Ruegeria sp. (strain TM1040) (Silicibacter sp.).